A 159-amino-acid chain; its full sequence is Dihydrofolate reductase (159 aa).

Positions 1–158 (MISLIAALAV…HSYCFEILER (158 aa)) constitute a DHFR domain. Ile5 is a binding site for substrate. NADP(+) contacts are provided by residues Ala7 and 13–19 (VIGMENA). Asp27 provides a ligand contact to substrate. 45-46 (LT) is an NADP(+) binding site. Substrate is bound by residues Arg52 and Arg57. NADP(+) is bound by residues 63–64 (SS), Lys76, and 95–102 (GGGRVYEQ). Position 113 (Thr113) interacts with substrate.

It belongs to the dihydrofolate reductase family.

It carries out the reaction (6S)-5,6,7,8-tetrahydrofolate + NADP(+) = 7,8-dihydrofolate + NADPH + H(+). The protein operates within cofactor biosynthesis; tetrahydrofolate biosynthesis; 5,6,7,8-tetrahydrofolate from 7,8-dihydrofolate: step 1/1. Functionally, key enzyme in folate metabolism. Catalyzes an essential reaction for de novo glycine and purine synthesis, and for DNA precursor synthesis. The chain is Dihydrofolate reductase (folA) from Klebsiella aerogenes (Enterobacter aerogenes).